A 446-amino-acid chain; its full sequence is Ribosomal protein uS12 methylthiotransferase RimO (446 aa).

Residues 7 to 118 (PKIAFAHLGC…IVEVIERVER (112 aa)) enclose the MTTase N-terminal domain. Positions 16, 52, 81, 156, 160, and 163 each coordinate [4Fe-4S] cluster. The Radical SAM core domain occupies 142–371 (TTPAPVAYLR…MELQQPIAQR (230 aa)). In terms of domain architecture, TRAM spans 374 to 440 (AAEVGKIVPV…IYDLYGIIPA (67 aa)).

The protein belongs to the methylthiotransferase family. RimO subfamily. The cofactor is [4Fe-4S] cluster.

The protein localises to the cytoplasm. It catalyses the reaction L-aspartate(89)-[ribosomal protein uS12]-hydrogen + (sulfur carrier)-SH + AH2 + 2 S-adenosyl-L-methionine = 3-methylsulfanyl-L-aspartate(89)-[ribosomal protein uS12]-hydrogen + (sulfur carrier)-H + 5'-deoxyadenosine + L-methionine + A + S-adenosyl-L-homocysteine + 2 H(+). In terms of biological role, catalyzes the methylthiolation of an aspartic acid residue of ribosomal protein uS12. In Thermosynechococcus vestitus (strain NIES-2133 / IAM M-273 / BP-1), this protein is Ribosomal protein uS12 methylthiotransferase RimO.